We begin with the raw amino-acid sequence, 428 residues long: MAKEKPHVNIVFIGHVDHGKSTTIGRLLFDTANIPENIIKKFEEMGEKGKSFKFAWVMDRLKEERERGITIDVAHTKFETPHRYITIIDAPGHRDFVKNMITGASQADAAVLVVAATDGVMPQTKEHAFLARTLGINHIIVAINKMDMVNYDQKVFEKVKAQVEKLLKMLGYKDFPVIPISAWEGDNVVKKSDKMPWYKGPTLIEALDQIPEPPKPIDKPLRIPIQDVYSIKGVGTVPVGRVETGVLRVGDVVIFEPASTIFHKPIQGEVKSIEMHHEPLQEAYPGDNIGFNVRGVGKNDIKRGDVAGHTTNPPTVVRPKDTFKAQIIVLNHPTAITVGYTPVLHAHTTQVAVRFEQLLAKLDPRTGNIVEENPQFIKTGDSAIVILRPTKAMVIEPVKEIPQMGRFAIRDMGQTVAAGMVISIQKAE.

The tr-type G domain maps to 5-215 (KPHVNIVFIG…ALDQIPEPPK (211 aa)). Residues 14 to 21 (GHVDHGKS) form a G1 region. 14 to 21 (GHVDHGKS) is a GTP binding site. Ser-21 is a binding site for Mg(2+). The interval 68–72 (GITID) is G2. The segment at 89–92 (DAPG) is G3. GTP-binding positions include 89–93 (DAPGH) and 144–147 (NKMD). The segment at 144 to 147 (NKMD) is G4. Residues 181 to 183 (SAW) form a G5 region.

This sequence belongs to the TRAFAC class translation factor GTPase superfamily. Classic translation factor GTPase family. EF-Tu/EF-1A subfamily.

It localises to the cytoplasm. The enzyme catalyses GTP + H2O = GDP + phosphate + H(+). Functionally, GTP hydrolase that promotes the GTP-dependent binding of aminoacyl-tRNA to the A-site of ribosomes during protein biosynthesis. The protein is Elongation factor 1-alpha of Thermococcus gammatolerans (strain DSM 15229 / JCM 11827 / EJ3).